The primary structure comprises 1175 residues: Phospholipid-transporting ATPase IF (1175 aa).

The next 4 helical transmembrane spans lie at 69 to 89 (FYFL…SPIT), 91 to 111 (GLPL…EDWL), 287 to 307 (NTFL…STIL), and 338 to 358 (FISD…ISLY). D407 (4-aspartylphosphate intermediate) is an active-site residue. ATP-binding residues include D407, K408, T409, E530, F571, K594, R625, T705, G706, D707, R793, and K799. D407 is a Mg(2+) binding site. T409 lines the Mg(2+) pocket. D820 provides a ligand contact to Mg(2+). ATP is bound by residues N823 and D824. Position 824 (D824) interacts with Mg(2+). 6 helical membrane-spanning segments follow: residues 862–882 (LLFV…QYFF), 910–930 (VYLT…YSLV), 963–983 (WTVL…FLVG), 994–1014 (MFGN…TVTV), 1033–1053 (GSII…WPFL), and 1060–1080 (FVFI…LMVV).

It belongs to the cation transport ATPase (P-type) (TC 3.A.3) family. Type IV subfamily. In terms of assembly, component of a P4-ATPase flippase complex which consists of a catalytic alpha subunit ATP11B and an accessory beta subunit TMEM30A. Mg(2+) is required as a cofactor. In terms of tissue distribution, expressed in retina, brain, liver, testes and kidney (at protein level).

The protein resides in the recycling endosome membrane. It is found in the early endosome. It localises to the endoplasmic reticulum. The protein localises to the golgi apparatus. Its subcellular location is the trans-Golgi network. It carries out the reaction ATP + H2O + phospholipidSide 1 = ADP + phosphate + phospholipidSide 2.. It catalyses the reaction a 1,2-diacyl-sn-glycero-3-phospho-L-serine(out) + ATP + H2O = a 1,2-diacyl-sn-glycero-3-phospho-L-serine(in) + ADP + phosphate + H(+). The enzyme catalyses a 1,2-diacyl-sn-glycero-3-phosphoethanolamine(out) + ATP + H2O = a 1,2-diacyl-sn-glycero-3-phosphoethanolamine(in) + ADP + phosphate + H(+). Its function is as follows. Catalytic component of a P4-ATPase flippase complex which catalyzes the hydrolysis of ATP coupled to the transport of aminophospholipids, phosphatidylserines (PS) and phosphatidylethanolamines (PE), from the outer to the inner leaflet of intracellular membranes. May contribute to the maintenance of membrane lipid asymmetry in endosome compartment. This Mus musculus (Mouse) protein is Phospholipid-transporting ATPase IF.